The sequence spans 354 residues: Probable L-ascorbate-6-phosphate lactonase UlaG (354 aa).

This sequence belongs to the UlaG family. It depends on a divalent metal cation as a cofactor.

It localises to the cytoplasm. It catalyses the reaction L-ascorbate 6-phosphate + H2O = 3-dehydro-L-gulonate 6-phosphate. It participates in cofactor degradation; L-ascorbate degradation; D-xylulose 5-phosphate from L-ascorbate: step 1/4. Functionally, probably catalyzes the hydrolysis of L-ascorbate-6-P into 3-keto-L-gulonate-6-P. Is essential for L-ascorbate utilization under anaerobic conditions. The chain is Probable L-ascorbate-6-phosphate lactonase UlaG from Salmonella agona (strain SL483).